Reading from the N-terminus, the 122-residue chain is Cadmium resistance transcriptional regulatory protein CadC (122 aa).

4 residues coordinate Cd(2+): C7, C11, C58, and C60. Positions L24–K119 constitute an HTH arsR-type domain. The H-T-H motif DNA-binding region spans V59 to R78. The Zn(2+) site is built by D101, H103, H114, and E117.

In terms of assembly, homodimer.

Metal-binding repressor for the cad operon. Involved in resistance to heavy metals, such as cadmium, bismuth, zinc or lead. Binds 2 metal ions per subunit. Metal binding to the N-terminal regulatory site causes the repressor to dissociate from the DNA. This is Cadmium resistance transcriptional regulatory protein CadC (cadC) from Staphylococcus aureus.